The primary structure comprises 412 residues: Putative competence-damage inducible protein (412 aa).

The protein belongs to the CinA family.

This Bacillus cereus (strain AH820) protein is Putative competence-damage inducible protein.